We begin with the raw amino-acid sequence, 393 residues long: MNVIKLTDLDVSGKRVFIRADLNVPQDEAGNITEDTRIRASLPSIKYCLEKGAAVMVTSHLGRPTEGELNHEDSLMPVAVRLGQMLHTSVRLITDWVDGGFEVKPGEVVLLENCRVNKGEKKNNDELAQKMAKLCDIYVNDAFGTAHRAEATTHGIAKYAPVACAGMLMGAEIDALSKALHEPKRPLVAIVGGSKVSSKLTILKSLASKVDQLIVGGGIANTFLLADGKRIGHSLAEPDLVKEAHTIMDIMKERGAEVPLPTDVVVADEVSALARANKISVDDVHANDRILDVGPKTAAKFAEIIANAGTIVWNGPVGVFELPQFAGGTKMMASAIAHSEAFSIAGGGDTLAAIAKFHIADDVGYISTGGGAFLEFLEGKTLPAIAILEERAA.

Substrate is bound by residues 21 to 23 (DLN), R37, 60 to 63 (HLGR), R115, and R148. Residues K199, E321, and 347-350 (GGDT) contribute to the ATP site.

Belongs to the phosphoglycerate kinase family. As to quaternary structure, monomer.

The protein localises to the cytoplasm. It catalyses the reaction (2R)-3-phosphoglycerate + ATP = (2R)-3-phospho-glyceroyl phosphate + ADP. Its pathway is carbohydrate degradation; glycolysis; pyruvate from D-glyceraldehyde 3-phosphate: step 2/5. This is Phosphoglycerate kinase from Dechloromonas aromatica (strain RCB).